The chain runs to 704 residues: MAISKIAFLALIALSGLCGLASATYKVGVGRADITGPPVEINFMGYANIKQVGRGIHTRVFARAFVVEDEKGNRVAFVSADAGMMGYGLKREVIKRLQARYGNLYHTDNVAISGTHTHGAPGGFLMHLLYDISILGFVPQTFEVMAQGLYLCIKRATDNLVDGRIFLSKTTVLNVNINRSPTSYLRNPEEERAQYEHDTDKTLTQLRFVDLENNLLGAFNWYAVHATSMNNTNRLVTSDNVGYAALLLEKEYNPNKMPGKGKFVGAFCSSNLGDVSPNIMGPKCSISGNECDLLTSRCPAGEGECFASGPGRDMVESTQILGQRLADAALGLLNEQSQESTAREVTGDVRFIHQFVDMPNYNGSAYNPLSRKIDKIRGCQPAMGYSFAAGTTDGPGAFSFEQGTTTDNPMWNFVRDFIATPTQEDIKCHEPKPILLATGRATFPYEWQPKIVSDQLLKIGDVIIAAVPCEFTTMAGRRLRNQIRAAASAAGGLDTEVIIAGLTNIYTSYTVTPEEYQAQRYEAASTIFGPHTHSIYMDVFERLTKALMRNETVEPGPSPPYMNDVMLSLNTGVLFDGHPINTDFGYVKTQPEKEYGINDTVKVTYISGNPRNNLFTEKTYFTVERKINEDRWKVAYTDASWETKMIWHRTNTILGFSDLEIYWNISPQTLPGVYRIRHSGEYKYILGGKYPYEGLSHSFTVKED.

The N-terminal stretch at 1 to 23 is a signal peptide; the sequence is MAISKIAFLALIALSGLCGLASA. N-linked (GlcNAc...) asparagine glycosylation occurs at Asn-230. Ser-276 functions as the Nucleophile in the catalytic mechanism. N-linked (GlcNAc...) asparagine glycosylation is found at Asn-362, Asn-550, and Asn-598.

It belongs to the neutral ceramidase family. In terms of processing, N-glycosylated.

Its subcellular location is the secreted. It carries out the reaction an N-acylsphing-4-enine + H2O = sphing-4-enine + a fatty acid. In terms of biological role, hydrolyzes the sphingolipid ceramide into sphingosine and free fatty acid at an optimal pH of 6.5-7.5. Acts as a key regulator of sphingolipid signaling metabolites by generating sphingosine at the cell surface. The polypeptide is Neutral ceramidase (CDase) (Drosophila pseudoobscura pseudoobscura (Fruit fly)).